A 472-amino-acid polypeptide reads, in one-letter code: Glutamate--tRNA ligase 1 (472 aa).

Residues 13 to 23 (PSPTGYLHIGG) carry the 'HIGH' region motif. The Zn(2+) site is built by C102, C104, C129, and E131. Residues 239–243 (RLSKR) carry the 'KMSKS' region motif. K242 is a binding site for ATP.

Belongs to the class-I aminoacyl-tRNA synthetase family. Glutamate--tRNA ligase type 1 subfamily. Monomer. It depends on Zn(2+) as a cofactor.

Its subcellular location is the cytoplasm. The enzyme catalyses tRNA(Glu) + L-glutamate + ATP = L-glutamyl-tRNA(Glu) + AMP + diphosphate. Functionally, catalyzes the attachment of glutamate to tRNA(Glu) in a two-step reaction: glutamate is first activated by ATP to form Glu-AMP and then transferred to the acceptor end of tRNA(Glu). The polypeptide is Glutamate--tRNA ligase 1 (Syntrophus aciditrophicus (strain SB)).